Here is a 420-residue protein sequence, read N- to C-terminus: UDP-N-acetylglucosamine 1-carboxyvinyltransferase (420 aa).

A phosphoenolpyruvate-binding site is contributed by 22–23 (KN). Arg95 is a binding site for UDP-N-acetyl-alpha-D-glucosamine. Cys119 acts as the Proton donor in catalysis. Cys119 carries the post-translational modification 2-(S-cysteinyl)pyruvic acid O-phosphothioketal. UDP-N-acetyl-alpha-D-glucosamine is bound by residues 124 to 128 (RPIDQ), Asp307, and Ile329.

The protein belongs to the EPSP synthase family. MurA subfamily.

It is found in the cytoplasm. It carries out the reaction phosphoenolpyruvate + UDP-N-acetyl-alpha-D-glucosamine = UDP-N-acetyl-3-O-(1-carboxyvinyl)-alpha-D-glucosamine + phosphate. The protein operates within cell wall biogenesis; peptidoglycan biosynthesis. In terms of biological role, cell wall formation. Adds enolpyruvyl to UDP-N-acetylglucosamine. The protein is UDP-N-acetylglucosamine 1-carboxyvinyltransferase of Myxococcus xanthus (strain DK1622).